Consider the following 425-residue polypeptide: Putative E3 ubiquitin-protein ligase UBR7 (425 aa).

Residues 44 to 116 form a UBR-type zinc finger; that stretch reads EKCSYSQGSV…KNLECKLFPD (73 aa). Residues 132-188 form a PHD-type; atypical zinc finger; that stretch reads GLYCVCKRPYPDPEDEVPDEMIQCVVCEDWFHGRHLGAIPPESGDFQEMVCQACMRR. A disordered region spans residues 212-269; it reads LPNATGMGDEDVSKPENGAPQDNGLKEDAPEHGRDSVNEVKAEQKNEPCSSSSSESDL. Residues K225 and K252 each participate in a glycyl lysine isopeptide (Lys-Gly) (interchain with G-Cter in SUMO2) cross-link. The span at 235 to 257 shows a compositional bias: basic and acidic residues; sequence GLKEDAPEHGRDSVNEVKAEQKN. At S264 the chain carries Phosphoserine. Glycyl lysine isopeptide (Lys-Gly) (interchain with G-Cter in SUMO2) cross-links involve residues K274 and K398.

In terms of tissue distribution, expressed in testis and sperm (at protein level).

It catalyses the reaction S-ubiquitinyl-[E2 ubiquitin-conjugating enzyme]-L-cysteine + [acceptor protein]-L-lysine = [E2 ubiquitin-conjugating enzyme]-L-cysteine + N(6)-ubiquitinyl-[acceptor protein]-L-lysine.. It participates in protein modification; protein ubiquitination. In terms of biological role, E3 ubiquitin-protein ligase which is a component of the N-end rule pathway. Recognizes and binds to proteins bearing specific N-terminal residues that are destabilizing according to the N-end rule, leading to their ubiquitination and subsequent degradation. The protein is Putative E3 ubiquitin-protein ligase UBR7 (Ubr7) of Mus musculus (Mouse).